The primary structure comprises 857 residues: Protein translocase subunit SecA (857 aa).

Residues Q88, 106 to 110, and D496 each bind ATP; that span reads GEGKT. C833, C835, C844, and C845 together coordinate Zn(2+).

It belongs to the SecA family. In terms of assembly, monomer and homodimer. Part of the essential Sec protein translocation apparatus which comprises SecA, SecYEG and auxiliary proteins SecDF-YajC and YidC. It depends on Zn(2+) as a cofactor.

Its subcellular location is the cell inner membrane. It is found in the cytoplasm. The catalysed reaction is ATP + H2O + cellular proteinSide 1 = ADP + phosphate + cellular proteinSide 2.. Part of the Sec protein translocase complex. Interacts with the SecYEG preprotein conducting channel. Has a central role in coupling the hydrolysis of ATP to the transfer of proteins into and across the cell membrane, serving as an ATP-driven molecular motor driving the stepwise translocation of polypeptide chains across the membrane. This Sulfurimonas denitrificans (strain ATCC 33889 / DSM 1251) (Thiomicrospira denitrificans (strain ATCC 33889 / DSM 1251)) protein is Protein translocase subunit SecA.